A 233-amino-acid polypeptide reads, in one-letter code: MGEDLNIRIKDLPYEERPRERLIKYGPQVLSNAELIAIIIGTGSRRENAISLAQKLITEERGLKFIVNSSVEKLANIRGIGIAKAVKLKAAVELGRRLMLSTQGENFSVTSPEDVINLLMEEMRYLSKEHFKVVMLNVKNKIIAIETISIGSLNTSIVHPREVFKAAIERSASSIILVHNHPSGDPTPSREDVEVTKRLVEAGNILGIKVLDHVIIGDGRGISLKEKGYYDFE.

One can recognise an MPN domain in the interval 108–230 (SVTSPEDVIN…GISLKEKGYY (123 aa)). Positions 179, 181, and 192 each coordinate Zn(2+). A JAMM motif motif is present at residues 179-192 (HNHPSGDPTPSRED).

Belongs to the UPF0758 family.

This chain is UPF0758 protein TTE0897, found in Caldanaerobacter subterraneus subsp. tengcongensis (strain DSM 15242 / JCM 11007 / NBRC 100824 / MB4) (Thermoanaerobacter tengcongensis).